Here is a 158-residue protein sequence, read N- to C-terminus: Methylated-DNA--protein-cysteine methyltransferase (158 aa).

The Nucleophile; methyl group acceptor role is filled by Cys126.

It belongs to the MGMT family.

Its subcellular location is the cytoplasm. It catalyses the reaction a 6-O-methyl-2'-deoxyguanosine in DNA + L-cysteinyl-[protein] = S-methyl-L-cysteinyl-[protein] + a 2'-deoxyguanosine in DNA. The enzyme catalyses a 4-O-methyl-thymidine in DNA + L-cysteinyl-[protein] = a thymidine in DNA + S-methyl-L-cysteinyl-[protein]. Its function is as follows. Involved in the cellular defense against the biological effects of O6-methylguanine (O6-MeG) and O4-methylthymine (O4-MeT) in DNA. Repairs the methylated nucleobase in DNA by stoichiometrically transferring the methyl group to a cysteine residue in the enzyme. This is a suicide reaction: the enzyme is irreversibly inactivated. The chain is Methylated-DNA--protein-cysteine methyltransferase from Methanosarcina barkeri (strain Fusaro / DSM 804).